The following is a 367-amino-acid chain: UDP-N-acetylglucosamine--N-acetylmuramyl-(pentapeptide) pyrophosphoryl-undecaprenol N-acetylglucosamine transferase (367 aa).

Residues 21–23, N129, R170, S198, and Q295 each bind UDP-N-acetyl-alpha-D-glucosamine; that span reads TGG.

Belongs to the glycosyltransferase 28 family. MurG subfamily.

The protein localises to the cell inner membrane. The catalysed reaction is di-trans,octa-cis-undecaprenyl diphospho-N-acetyl-alpha-D-muramoyl-L-alanyl-D-glutamyl-meso-2,6-diaminopimeloyl-D-alanyl-D-alanine + UDP-N-acetyl-alpha-D-glucosamine = di-trans,octa-cis-undecaprenyl diphospho-[N-acetyl-alpha-D-glucosaminyl-(1-&gt;4)]-N-acetyl-alpha-D-muramoyl-L-alanyl-D-glutamyl-meso-2,6-diaminopimeloyl-D-alanyl-D-alanine + UDP + H(+). It participates in cell wall biogenesis; peptidoglycan biosynthesis. Functionally, cell wall formation. Catalyzes the transfer of a GlcNAc subunit on undecaprenyl-pyrophosphoryl-MurNAc-pentapeptide (lipid intermediate I) to form undecaprenyl-pyrophosphoryl-MurNAc-(pentapeptide)GlcNAc (lipid intermediate II). The polypeptide is UDP-N-acetylglucosamine--N-acetylmuramyl-(pentapeptide) pyrophosphoryl-undecaprenol N-acetylglucosamine transferase (Synechococcus sp. (strain JA-2-3B'a(2-13)) (Cyanobacteria bacterium Yellowstone B-Prime)).